A 400-amino-acid chain; its full sequence is Probable tRNA pseudouridine synthase D (400 aa).

Catalysis depends on aspartate 89, which acts as the Nucleophile. Residues 162-357 (GVPNYYGLQR…AGGDRKPALL (196 aa)) form the TRUD domain.

Belongs to the pseudouridine synthase TruD family.

It carries out the reaction uridine(13) in tRNA = pseudouridine(13) in tRNA. Could be responsible for synthesis of pseudouridine from uracil-13 in transfer RNAs. The polypeptide is Probable tRNA pseudouridine synthase D (Methanopyrus kandleri (strain AV19 / DSM 6324 / JCM 9639 / NBRC 100938)).